The following is a 221-amino-acid chain: Ribosomal RNA small subunit methyltransferase G (221 aa).

S-adenosyl-L-methionine-binding positions include G85, L90, 138 to 139 (AE), and R151.

Belongs to the methyltransferase superfamily. RNA methyltransferase RsmG family.

It localises to the cytoplasm. The catalysed reaction is guanosine(527) in 16S rRNA + S-adenosyl-L-methionine = N(7)-methylguanosine(527) in 16S rRNA + S-adenosyl-L-homocysteine. Its function is as follows. Specifically methylates the N7 position of guanine in position 527 of 16S rRNA. The polypeptide is Ribosomal RNA small subunit methyltransferase G (Caulobacter sp. (strain K31)).